We begin with the raw amino-acid sequence, 220 residues long: Uracil-DNA glycosylase 1 (220 aa).

Asp65 (proton acceptor) is an active-site residue.

Belongs to the uracil-DNA glycosylase (UDG) superfamily. UNG family.

It localises to the cytoplasm. The enzyme catalyses Hydrolyzes single-stranded DNA or mismatched double-stranded DNA and polynucleotides, releasing free uracil.. Its function is as follows. Excises uracil residues from the DNA which can arise as a result of misincorporation of dUMP residues by DNA polymerase or due to deamination of cytosine. This chain is Uracil-DNA glycosylase 1, found in Bacteroides fragilis (strain YCH46).